Here is a 1058-residue protein sequence, read N- to C-terminus: Carbamoyl phosphate synthase large chain (1058 aa).

Positions 1–401 (MPKRTDIQKI…SLLKACRSLE (401 aa)) are carboxyphosphate synthetic domain. Positions 129, 169, 175, 176, 208, 210, 215, 241, 242, 243, 284, and 298 each coordinate ATP. The 195-residue stretch at 133-327 (KQLMEELEQP…IAKLAAKIAV (195 aa)) folds into the ATP-grasp 1 domain. Glutamine 284, glutamate 298, and asparagine 300 together coordinate Mg(2+). Glutamine 284, glutamate 298, and asparagine 300 together coordinate Mn(2+). Residues 402–546 (IGVHHNEIPE…YSTYGWENES (145 aa)) are oligomerization domain. The interval 547–929 (IRSDKESVLV…ALYKAFEASY (383 aa)) is carbamoyl phosphate synthetic domain. One can recognise an ATP-grasp 2 domain in the interval 671-861 (EQALKELDIP…MAQVATKLIL (191 aa)). Residues arginine 707, serine 746, isoleucine 748, glutamate 752, glycine 777, valine 778, histidine 779, serine 780, glutamine 820, and glutamate 832 each contribute to the ATP site. Mg(2+) is bound by residues glutamine 820, glutamate 832, and asparagine 834. Residues glutamine 820, glutamate 832, and asparagine 834 each contribute to the Mn(2+) site. Positions 930-1058 (LHLPTFGNVV…ESRSFVTEAI (129 aa)) constitute an MGS-like domain. Positions 930–1058 (LHLPTFGNVV…ESRSFVTEAI (129 aa)) are allosteric domain.

This sequence belongs to the CarB family. In terms of assembly, composed of two chains; the small (or glutamine) chain promotes the hydrolysis of glutamine to ammonia, which is used by the large (or ammonia) chain to synthesize carbamoyl phosphate. Tetramer of heterodimers (alpha,beta)4. Requires Mg(2+) as cofactor. Mn(2+) is required as a cofactor.

It catalyses the reaction hydrogencarbonate + L-glutamine + 2 ATP + H2O = carbamoyl phosphate + L-glutamate + 2 ADP + phosphate + 2 H(+). The catalysed reaction is hydrogencarbonate + NH4(+) + 2 ATP = carbamoyl phosphate + 2 ADP + phosphate + 2 H(+). It participates in amino-acid biosynthesis; L-arginine biosynthesis; carbamoyl phosphate from bicarbonate: step 1/1. Its pathway is pyrimidine metabolism; UMP biosynthesis via de novo pathway; (S)-dihydroorotate from bicarbonate: step 1/3. Its function is as follows. Large subunit of the glutamine-dependent carbamoyl phosphate synthetase (CPSase). CPSase catalyzes the formation of carbamoyl phosphate from the ammonia moiety of glutamine, carbonate, and phosphate donated by ATP, constituting the first step of 2 biosynthetic pathways, one leading to arginine and/or urea and the other to pyrimidine nucleotides. The large subunit (synthetase) binds the substrates ammonia (free or transferred from glutamine from the small subunit), hydrogencarbonate and ATP and carries out an ATP-coupled ligase reaction, activating hydrogencarbonate by forming carboxy phosphate which reacts with ammonia to form carbamoyl phosphate. This Streptococcus pneumoniae serotype 19F (strain G54) protein is Carbamoyl phosphate synthase large chain.